A 239-amino-acid polypeptide reads, in one-letter code: Skn-1 dependent zygotic transcript 1 protein (239 aa).

May have a role in mesendoderm development during embryogenesis. The protein is Skn-1 dependent zygotic transcript 1 protein of Caenorhabditis briggsae.